The chain runs to 109 residues: Flagellar hook-basal body complex protein FliE (109 aa).

The protein belongs to the FliE family.

The protein localises to the bacterial flagellum basal body. This is Flagellar hook-basal body complex protein FliE from Pseudomonas savastanoi pv. phaseolicola (strain 1448A / Race 6) (Pseudomonas syringae pv. phaseolicola (strain 1448A / Race 6)).